Consider the following 149-residue polypeptide: Large ribosomal subunit protein bL9 (149 aa).

The protein belongs to the bacterial ribosomal protein bL9 family.

Binds to the 23S rRNA. The chain is Large ribosomal subunit protein bL9 from Helicobacter pylori (strain P12).